The sequence spans 332 residues: DNA-directed RNA polymerase subunit alpha (332 aa).

Residues 1–226 (MLIAQRPTLT…ELFGLCRELN (226 aa)) are alpha N-terminal domain (alpha-NTD). The interval 245-332 (PEMNIPIEDL…GGTFFSPEDE (88 aa)) is alpha C-terminal domain (alpha-CTD).

This sequence belongs to the RNA polymerase alpha chain family. As to quaternary structure, homodimer. The RNAP catalytic core consists of 2 alpha, 1 beta, 1 beta' and 1 omega subunit. When a sigma factor is associated with the core the holoenzyme is formed, which can initiate transcription.

It carries out the reaction RNA(n) + a ribonucleoside 5'-triphosphate = RNA(n+1) + diphosphate. Its function is as follows. DNA-dependent RNA polymerase catalyzes the transcription of DNA into RNA using the four ribonucleoside triphosphates as substrates. The sequence is that of DNA-directed RNA polymerase subunit alpha from Bifidobacterium adolescentis (strain ATCC 15703 / DSM 20083 / NCTC 11814 / E194a).